A 1508-amino-acid polypeptide reads, in one-letter code: uncharacterized protein (1508 aa).

The stretch at 149–267 (ARRQQWRLRR…ARSLQEHRAT (119 aa)) forms a coiled coil. 5 disordered regions span residues 248–268 (ERSEREREEAARSLQEHRATE), 345–403 (SQDW…LAGS), 536–575 (FLKKHPKDLKDTWNNGGGSLAGRTEEGKARGTLGRKGKNL), 725–754 (GLEEEDEMPHQEASGLGCRGAPEEPDSQEH), and 868–916 (EAKS…AEPW). Over residues 868 to 881 (EAKSKESGEGDKPG) the composition is skewed to basic and acidic residues. The stretch at 972–1034 (ISRLERDNHR…KGNLGQLQKA (63 aa)) forms a coiled coil. 2 disordered regions span residues 1158–1186 (LAAGQTGPSTGTGNSRRGADSPPPSLVWR) and 1204–1246 (KEAH…EEDP). Residues 1163–1172 (TGPSTGTGNS) show a composition bias toward polar residues. Residues 1204–1215 (KEAHLEKEEKRP) are compositionally biased toward basic and acidic residues. Positions 1220–1230 (AQGQALSSLSN) are enriched in polar residues. The stretch at 1271-1302 (HQASLDEATRLQEELQAKLEELQKKQHEAKLA) forms a coiled coil.

This is an uncharacterized protein from Homo sapiens (Human).